Reading from the N-terminus, the 338-residue chain is Anthranilate phosphoribosyltransferase (338 aa).

5-phospho-alpha-D-ribose 1-diphosphate contacts are provided by residues glycine 81, 84 to 85 (GD), serine 89, 91 to 94 (NIST), 109 to 117 (KHGNRSVSS), and serine 121. Glycine 81 lines the anthranilate pocket. Residue serine 93 participates in Mg(2+) binding. Position 112 (asparagine 112) interacts with anthranilate. Arginine 167 serves as a coordination point for anthranilate. Mg(2+) is bound by residues aspartate 226 and glutamate 227.

Belongs to the anthranilate phosphoribosyltransferase family. As to quaternary structure, homodimer. Mg(2+) is required as a cofactor.

The enzyme catalyses N-(5-phospho-beta-D-ribosyl)anthranilate + diphosphate = 5-phospho-alpha-D-ribose 1-diphosphate + anthranilate. Its pathway is amino-acid biosynthesis; L-tryptophan biosynthesis; L-tryptophan from chorismate: step 2/5. Functionally, catalyzes the transfer of the phosphoribosyl group of 5-phosphorylribose-1-pyrophosphate (PRPP) to anthranilate to yield N-(5'-phosphoribosyl)-anthranilate (PRA). This is Anthranilate phosphoribosyltransferase from Thioalkalivibrio sulfidiphilus (strain HL-EbGR7).